The chain runs to 468 residues: Lactate utilization protein B (468 aa).

4Fe-4S ferredoxin-type domains follow at residues glycine 303 to tyrosine 333 and tyrosine 352 to leucine 381. Cysteine 312, cysteine 315, cysteine 318, cysteine 322, cysteine 365, cysteine 368, and cysteine 372 together coordinate [4Fe-4S] cluster. Positions proline 442–alanine 468 are disordered. The span at threonine 457–alanine 468 shows a compositional bias: basic and acidic residues.

Belongs to the LutB/YkgF family.

In terms of biological role, is involved in L-lactate degradation and allows cells to grow with lactate as the sole carbon source. Has probably a role as an electron transporter during oxidation of L-lactate. This chain is Lactate utilization protein B, found in Exiguobacterium sp. (strain ATCC BAA-1283 / AT1b).